A 465-amino-acid chain; its full sequence is Cysteine--tRNA ligase (465 aa).

Cysteine 28 contacts Zn(2+). Residues 30 to 40 (PTVYNYIHVGN) carry the 'HIGH' region motif. Residues cysteine 208, histidine 233, and glutamate 237 each contribute to the Zn(2+) site. Residues 265–269 (KMSKS) carry the 'KMSKS' region motif. Lysine 268 provides a ligand contact to ATP.

It belongs to the class-I aminoacyl-tRNA synthetase family. In terms of assembly, monomer. Zn(2+) is required as a cofactor.

It is found in the cytoplasm. It carries out the reaction tRNA(Cys) + L-cysteine + ATP = L-cysteinyl-tRNA(Cys) + AMP + diphosphate. This Exiguobacterium sp. (strain ATCC BAA-1283 / AT1b) protein is Cysteine--tRNA ligase.